A 380-amino-acid polypeptide reads, in one-letter code: Nucleoporin Nup43 (380 aa).

Met1 bears the N-acetylmethionine mark. 6 WD repeats span residues 8-57 (FVSQ…NLDS), 72-110 (RHHG…QTLS), 127-166 (PSYS…AVRT), 170-208 (ADSS…NEPS), 215-255 (GDRV…MPVS), and 259-299 (AHEA…PEKS).

Component of the Nup107-160 subcomplex of the nuclear pore complex (NPC). The Nup107-160 subcomplex includes NUP160, NUP133, NUP107, NUP98, NUP85, NUP43, NUP37, SEH1 and SEC13.

The protein localises to the chromosome. The protein resides in the centromere. It localises to the kinetochore. It is found in the nucleus. Its subcellular location is the nuclear pore complex. Component of the Nup107-160 subcomplex of the nuclear pore complex (NPC). The Nup107-160 subcomplex is required for the assembly of a functional NPC. The Nup107-160 subcomplex is also required for normal kinetochore microtubule attachment, mitotic progression and chromosome segregation. In Homo sapiens (Human), this protein is Nucleoporin Nup43 (NUP43).